We begin with the raw amino-acid sequence, 494 residues long: Cytochrome P450 2B11 (494 aa).

Serine 128 carries the phosphoserine; by PKA modification. Residue cysteine 436 participates in heme binding.

It belongs to the cytochrome P450 family. The cofactor is heme.

The protein localises to the endoplasmic reticulum membrane. The protein resides in the microsome membrane. The catalysed reaction is an organic molecule + reduced [NADPH--hemoprotein reductase] + O2 = an alcohol + oxidized [NADPH--hemoprotein reductase] + H2O + H(+). Its function is as follows. Cytochromes P450 are a group of heme-thiolate monooxygenases. In liver microsomes, this enzyme is involved in an NADPH-dependent electron transport pathway. This isozyme seems responsible for metabolism of 2,2',4,4',5,5'-hexachlorobiphenyl. The sequence is that of Cytochrome P450 2B11 (CYP2B11) from Canis lupus familiaris (Dog).